The primary structure comprises 165 residues: Cysteine-rich hydrophobic domain-containing protein 2 (165 aa).

A coiled-coil region spans residues Met1–Ser26. A CHIC motif (Cys-rich) motif is present at residues Cys88–Cys106.

The protein belongs to the CHIC family. In terms of processing, palmitoylation in the CHIC motif is required for membrane association.

It is found in the cell membrane. The protein resides in the cytoplasmic vesicle. In Homo sapiens (Human), this protein is Cysteine-rich hydrophobic domain-containing protein 2 (CHIC2).